Consider the following 281-residue polypeptide: Pantothenate synthetase (281 aa).

Residue 26 to 33 participates in ATP binding; it reads MGYLHQGH. His33 serves as the catalytic Proton donor. A (R)-pantoate-binding site is contributed by Gln57. Gln57 is a binding site for beta-alanine. An ATP-binding site is contributed by 143-146; that stretch reads GQKD. Gln149 contacts (R)-pantoate. Residues Val172 and 180 to 183 each bind ATP; that span reads LSSR.

This sequence belongs to the pantothenate synthetase family. Homodimer.

It localises to the cytoplasm. It carries out the reaction (R)-pantoate + beta-alanine + ATP = (R)-pantothenate + AMP + diphosphate + H(+). Its pathway is cofactor biosynthesis; (R)-pantothenate biosynthesis; (R)-pantothenate from (R)-pantoate and beta-alanine: step 1/1. Catalyzes the condensation of pantoate with beta-alanine in an ATP-dependent reaction via a pantoyl-adenylate intermediate. The sequence is that of Pantothenate synthetase from Chloroflexus aurantiacus (strain ATCC 29366 / DSM 635 / J-10-fl).